We begin with the raw amino-acid sequence, 795 residues long: Histidine biosynthesis trifunctional protein (795 aa).

Residues 1 to 225 are phosphoribosyl-AMP cyclohydrolase; it reads MLPVVPVFNA…VVRQGGSGSF (225 aa). Positions 226-308 are phosphoribosyl-ATP pyrophosphohydrolase; that stretch reads CHLETESCFG…FYFAMARLVA (83 aa). Residues 309-795 are histidinol dehydrogenase; it reads NGVSLEDVER…KLGLLPSGFE (487 aa). Zn(2+) is bound by residues Q614 and H617. Catalysis depends on residues E683 and H684. The Zn(2+) site is built by D717 and H776.

This sequence in the C-terminal section; belongs to the histidinol dehydrogenase family. Requires Zn(2+) as cofactor.

It carries out the reaction 1-(5-phospho-beta-D-ribosyl)-5'-AMP + H2O = 1-(5-phospho-beta-D-ribosyl)-5-[(5-phospho-beta-D-ribosylamino)methylideneamino]imidazole-4-carboxamide. It catalyses the reaction 1-(5-phospho-beta-D-ribosyl)-ATP + H2O = 1-(5-phospho-beta-D-ribosyl)-5'-AMP + diphosphate + H(+). The enzyme catalyses L-histidinol + 2 NAD(+) + H2O = L-histidine + 2 NADH + 3 H(+). Its pathway is amino-acid biosynthesis; L-histidine biosynthesis; L-histidine from 5-phospho-alpha-D-ribose 1-diphosphate: step 2/9. It participates in amino-acid biosynthesis; L-histidine biosynthesis; L-histidine from 5-phospho-alpha-D-ribose 1-diphosphate: step 3/9. The protein operates within amino-acid biosynthesis; L-histidine biosynthesis; L-histidine from 5-phospho-alpha-D-ribose 1-diphosphate: step 9/9. In Kluyveromyces lactis (strain ATCC 8585 / CBS 2359 / DSM 70799 / NBRC 1267 / NRRL Y-1140 / WM37) (Yeast), this protein is Histidine biosynthesis trifunctional protein (HIS4).